A 400-amino-acid chain; its full sequence is Na(+)/H(+) antiporter NhaA (400 aa).

11 helical membrane passes run 10-30 (FNLE…AMII), 60-80 (AHHW…GLEL), 95-115 (IILP…VYLF), 126-146 (GWAI…SLLG), 155-175 (VFLV…IALF), 178-198 (NDLS…LYML), 218-238 (IAVL…ALFI), 265-285 (GILP…AGFG), 295-315 (IAAG…WLIF), 334-354 (AALL…LAFA), and 364-384 (LGII…LKTT).

It belongs to the NhaA Na(+)/H(+) (TC 2.A.33) antiporter family.

The protein resides in the cell inner membrane. The enzyme catalyses Na(+)(in) + 2 H(+)(out) = Na(+)(out) + 2 H(+)(in). Na(+)/H(+) antiporter that extrudes sodium in exchange for external protons. The chain is Na(+)/H(+) antiporter NhaA from Psychrobacter arcticus (strain DSM 17307 / VKM B-2377 / 273-4).